A 291-amino-acid chain; its full sequence is Protease HtpX homolog (291 aa).

The next 2 helical transmembrane spans lie at 4–24 (ILLF…VASL) and 39–59 (GSLL…SLLI). Zn(2+) is bound at residue H144. E145 is a catalytic residue. H148 is a Zn(2+) binding site. A run of 2 helical transmembrane segments spans residues 159–179 (LIQG…AFAI) and 199–219 (ITTV…VAWF). E224 is a Zn(2+) binding site.

The protein belongs to the peptidase M48B family. Requires Zn(2+) as cofactor.

The protein resides in the cell inner membrane. This is Protease HtpX homolog from Albidiferax ferrireducens (strain ATCC BAA-621 / DSM 15236 / T118) (Rhodoferax ferrireducens).